The chain runs to 97 residues: Small cell adhesion glycoprotein (97 aa).

Residues M1–L36 are Extracellular-facing. T2 is a glycosylation site (O-linked (GalNAc...) threonine). O-linked (GalNAc...) serine glycosylation is present at S3. Residues T6 and T7 are each glycosylated (O-linked (GalNAc...) threonine). O-linked (GalNAc...) serine glycosylation occurs at S9. O-linked (GalNAc...) threonine glycans are attached at residues T16, T17, and T23. Residues I37–F57 form a helical; Signal-anchor for type III membrane protein membrane-spanning segment. Residues Y58–I97 are Cytoplasmic-facing.

The protein belongs to the SMAGP family. In terms of processing, O-glycosylated. The O-glycan is modified with sialic acid residues. In terms of tissue distribution, detected in breast, endometrium, colon and biliary tract. Detected in polarized epithelial structures characterized by cell-cell adhesion (at protein level).

The protein localises to the cell membrane. The protein resides in the cytoplasmic vesicle membrane. Functionally, may play a role in epithelial cell-cell contacts. May play a role in tumor invasiveness and metastasis formation. The protein is Small cell adhesion glycoprotein (SMAGP) of Homo sapiens (Human).